Here is a 76-residue protein sequence, read N- to C-terminus: COMM domain-containing protein 6 (76 aa).

In terms of domain architecture, COMM spans 9 to 76; sequence KLVDFQWKLG…KDMSNMIETL (68 aa).

It belongs to the COMM domain-containing protein 6 family. As to quaternary structure, component of the commander complex consisting of the CCC subcomplex and the retriever subcomplex. Component of the CCC subcomplex.

Its function is as follows. Scaffold protein in the commander complex that is essential for endosomal recycling of transmembrane cargos; the commander complex is composed of the CCC subcomplex and the retriever subcomplex. The polypeptide is COMM domain-containing protein 6 (commd6) (Dictyostelium discoideum (Social amoeba)).